The sequence spans 155 residues: Small ribosomal subunit protein uS7cz/uS7cy (155 aa).

It belongs to the universal ribosomal protein uS7 family. As to quaternary structure, part of the 30S ribosomal subunit.

The protein localises to the plastid. Functionally, one of the primary rRNA binding proteins, it binds directly to 16S rRNA where it nucleates assembly of the head domain of the 30S subunit. In Cuscuta obtusiflora (Peruvian dodder), this protein is Small ribosomal subunit protein uS7cz/uS7cy (rps7-A).